Here is a 179-residue protein sequence, read N- to C-terminus: ECF RNA polymerase sigma factor SigF (179 aa).

A sigma-70 factor domain-2 region spans residues 33 to 93; the sequence is RLRAYFMRRM…KLIDHWRRRK (61 aa). The Polymerase core binding signature appears at 51–64; it reads DLVQETLLAVHLKR. The interval 123 to 170 is sigma-70 factor domain-4; it reads ALASLPQRQRMLVSDVKLTGLSLAEAGARAGISEGAAKVALHRALKAL. The H-T-H motif DNA-binding region spans 145–164; that stretch reads LAEAGARAGISEGAAKVALH.

The protein belongs to the sigma-70 factor family. ECF subfamily.

The protein localises to the cytoplasm. Its function is as follows. Sigma factors are initiation factors that promote the attachment of RNA polymerase to specific initiation sites and are then released. Extracytoplasmic function (ECF) sigma factors are held in an inactive form by a cognate anti-sigma factor (NrsF in this case) until they are released. Up-regulates expression of 4 operons (sigF-nrsF, CCNA_02834, CCNA_03001 to CCNA_02999 and CCNA_03363 to CCNA_03366) in response to potassium dichromate (K(2)Cr(2)O(7)) or cadmium chloride (CdCl(2)). Overexpression of sigF leads to higher expression of its regulon. The sequence is that of ECF RNA polymerase sigma factor SigF from Caulobacter vibrioides (strain NA1000 / CB15N) (Caulobacter crescentus).